The following is a 63-amino-acid chain: Large ribosomal subunit protein uL29 (63 aa).

The protein belongs to the universal ribosomal protein uL29 family.

The protein is Large ribosomal subunit protein uL29 of Pectobacterium carotovorum subsp. carotovorum (strain PC1).